The sequence spans 78 residues: Major outer membrane lipoprotein Lpp (78 aa).

An N-terminal signal peptide occupies residues 1–20 (MNRTKLVLGAVILGSTLLAG). C21 carries N-palmitoyl cysteine lipidation. The S-diacylglycerol cysteine moiety is linked to residue C21. Residues 22–75 (SSNAKIDQLSTDVQTLNAKVDQLSNDVTAIRSDVQAAKDDAARANQRLDNQAHS) adopt a coiled-coil conformation. Repeats lie at residues 24–34 (NAKIDQLSTDV) and 38–48 (NAKVDQLSNDV). Residue K78 is modified to N6-murein peptidoglycan lysine.

It belongs to the Lpp family. Homotrimer.

Its subcellular location is the cell outer membrane. The protein resides in the secreted. It localises to the cell wall. A highly abundant outer membrane lipoprotein that controls the distance between the inner and outer membranes. The only protein known to be covalently linked to the peptidoglycan network (PGN). Also non-covalently binds the PGN. The link between the cell outer membrane and PGN contributes to maintenance of the structural and functional integrity of the cell envelope, and maintains the correct distance between the PGN and the outer membrane. In Erwinia amylovora (Fire blight bacteria), this protein is Major outer membrane lipoprotein Lpp.